A 399-amino-acid chain; its full sequence is Rhodopsin, G0-coupled (399 aa).

Over Met-1–Ser-17 the chain is Extracellular. N-linked (GlcNAc...) asparagine glycosylation occurs at Asn-6. A helical membrane pass occupies residues Glu-18–Val-43. The Cytoplasmic portion of the chain corresponds to Phe-44–Asn-55. A helical membrane pass occupies residues Phe-56–Phe-81. Topologically, residues Ser-82–Tyr-95 are extracellular. Cys-92 and Cys-169 form a disulfide bridge. Residues Ala-96–Phe-115 traverse the membrane as a helical segment. Topologically, residues Cys-116–Thr-134 are cytoplasmic. A helical transmembrane segment spans residues Val-135–Ser-158. Over Ser-159–Ser-182 the chain is Extracellular. A helical transmembrane segment spans residues Tyr-183–Lys-210. Over Val-211–Phe-240 the chain is Cytoplasmic. Residues Ile-241–Ala-263 traverse the membrane as a helical segment. Residues Ile-264–Asn-271 lie on the Extracellular side of the membrane. The chain crosses the membrane as a helical span at residues Ser-272 to Thr-295. Lys-282 is subject to N6-(retinylidene)lysine. At Asn-296–Ile-399 the chain is on the cytoplasmic side.

This sequence belongs to the G-protein coupled receptor 1 family. Opsin subfamily. In terms of processing, phosphorylated on some or all of the serine and threonine residues present in the C-terminal region. In terms of tissue distribution, retina. Expressed in the hyperpolarizing cell layer of the photoreceptor cells with its photoreceptive region adjacent to the lens.

It is found in the membrane. Functionally, visual pigments are the light-absorbing molecules that mediate vision. They consist of an apoprotein, opsin, covalently linked to cis-retinal. The sequence is that of Rhodopsin, G0-coupled (SCOP2) from Mizuhopecten yessoensis (Japanese scallop).